The chain runs to 467 residues: Glutamate--tRNA ligase (467 aa).

The 'HIGH' region motif lies at 9-19 (PSPTGNLHIGS). The short motif at 237 to 241 (KISKR) is the 'KMSKS' region element. An ATP-binding site is contributed by Lys240.

The protein belongs to the class-I aminoacyl-tRNA synthetase family. Glutamate--tRNA ligase type 1 subfamily. Monomer.

It localises to the cytoplasm. The catalysed reaction is tRNA(Glu) + L-glutamate + ATP = L-glutamyl-tRNA(Glu) + AMP + diphosphate. Catalyzes the attachment of glutamate to tRNA(Glu) in a two-step reaction: glutamate is first activated by ATP to form Glu-AMP and then transferred to the acceptor end of tRNA(Glu). The polypeptide is Glutamate--tRNA ligase (Buchnera aphidicola subsp. Acyrthosiphon pisum (strain APS) (Acyrthosiphon pisum symbiotic bacterium)).